The primary structure comprises 221 residues: Thiamine-phosphate synthase (221 aa).

Residues 44–48 (QFREK) and N79 contribute to the 4-amino-2-methyl-5-(diphosphooxymethyl)pyrimidine site. Mg(2+)-binding residues include D80 and D99. Position 117 (S117) interacts with 4-amino-2-methyl-5-(diphosphooxymethyl)pyrimidine. 143–145 (TSS) contacts 2-[(2R,5Z)-2-carboxy-4-methylthiazol-5(2H)-ylidene]ethyl phosphate. K146 contributes to the 4-amino-2-methyl-5-(diphosphooxymethyl)pyrimidine binding site. Residues G175 and 195–196 (IS) each bind 2-[(2R,5Z)-2-carboxy-4-methylthiazol-5(2H)-ylidene]ethyl phosphate.

The protein belongs to the thiamine-phosphate synthase family. Requires Mg(2+) as cofactor.

The catalysed reaction is 2-[(2R,5Z)-2-carboxy-4-methylthiazol-5(2H)-ylidene]ethyl phosphate + 4-amino-2-methyl-5-(diphosphooxymethyl)pyrimidine + 2 H(+) = thiamine phosphate + CO2 + diphosphate. The enzyme catalyses 2-(2-carboxy-4-methylthiazol-5-yl)ethyl phosphate + 4-amino-2-methyl-5-(diphosphooxymethyl)pyrimidine + 2 H(+) = thiamine phosphate + CO2 + diphosphate. It catalyses the reaction 4-methyl-5-(2-phosphooxyethyl)-thiazole + 4-amino-2-methyl-5-(diphosphooxymethyl)pyrimidine + H(+) = thiamine phosphate + diphosphate. The protein operates within cofactor biosynthesis; thiamine diphosphate biosynthesis; thiamine phosphate from 4-amino-2-methyl-5-diphosphomethylpyrimidine and 4-methyl-5-(2-phosphoethyl)-thiazole: step 1/1. Its function is as follows. Condenses 4-methyl-5-(beta-hydroxyethyl)thiazole monophosphate (THZ-P) and 2-methyl-4-amino-5-hydroxymethyl pyrimidine pyrophosphate (HMP-PP) to form thiamine monophosphate (TMP). This Geobacillus kaustophilus (strain HTA426) protein is Thiamine-phosphate synthase.